Consider the following 362-residue polypeptide: 3-dehydroquinate synthase (362 aa).

Residues 71–76, 105–109, 129–130, Lys142, Lys151, and 169–172 contribute to the NAD(+) site; these read DGEQYK, GVIGD, TT, and CLST. Zn(2+)-binding residues include Glu184, His247, and His264.

This sequence belongs to the sugar phosphate cyclases superfamily. Dehydroquinate synthase family. Co(2+) is required as a cofactor. Zn(2+) serves as cofactor. It depends on NAD(+) as a cofactor.

The protein localises to the cytoplasm. The enzyme catalyses 7-phospho-2-dehydro-3-deoxy-D-arabino-heptonate = 3-dehydroquinate + phosphate. Its pathway is metabolic intermediate biosynthesis; chorismate biosynthesis; chorismate from D-erythrose 4-phosphate and phosphoenolpyruvate: step 2/7. Catalyzes the conversion of 3-deoxy-D-arabino-heptulosonate 7-phosphate (DAHP) to dehydroquinate (DHQ). The chain is 3-dehydroquinate synthase from Vibrio atlanticus (strain LGP32) (Vibrio splendidus (strain Mel32)).